A 478-amino-acid polypeptide reads, in one-letter code: Protein adenylyltransferase VbhT (478 aa).

One can recognise a Fido domain in the interval 55-200; sequence FDLDHMKKIH…RRNLTEFTVN (146 aa). Residues 85–88, 133–136, 140–147, and serine 175 each bind ATP; these read KDNS, NALH, and EGNGRTLR.

In terms of assembly, homodimer. Interacts with VbhA.

The catalysed reaction is L-tyrosyl-[protein] + ATP = O-(5'-adenylyl)-L-tyrosyl-[protein] + diphosphate. It catalyses the reaction L-threonyl-[protein] + ATP = 3-O-(5'-adenylyl)-L-threonyl-[protein] + diphosphate. With respect to regulation, adenylyltransferase activity is inhibited by antitoxin VbhA; which acts by competing with ATP-binding at Arg-147 and prevents productive ATP-binding. Functionally, toxic component of type II toxin-antitoxin (TA) system VbhT-VbhA. Adenylyltransferase involved in virulence by mediating the addition of adenosine 5'-monophosphate (AMP) to specific residue of host GTPases. The resulting AMPylation affects GTPases, impairing actin assembly in infected cells. This Bartonella schoenbuchensis (strain DSM 13525 / NCTC 13165 / R1) protein is Protein adenylyltransferase VbhT (vbhT).